The following is a 144-amino-acid chain: Large ribosomal subunit protein uL11 (144 aa).

Belongs to the universal ribosomal protein uL11 family. Part of the ribosomal stalk of the 50S ribosomal subunit. Interacts with L10 and the large rRNA to form the base of the stalk. L10 forms an elongated spine to which L12 dimers bind in a sequential fashion forming a multimeric L10(L12)X complex. Post-translationally, one or more lysine residues are methylated.

In terms of biological role, forms part of the ribosomal stalk which helps the ribosome interact with GTP-bound translation factors. This Saccharopolyspora erythraea (strain ATCC 11635 / DSM 40517 / JCM 4748 / NBRC 13426 / NCIMB 8594 / NRRL 2338) protein is Large ribosomal subunit protein uL11.